The sequence spans 167 residues: Small ribosomal subunit protein uS5 (167 aa).

An S5 DRBM domain is found at 12–75 (LNEKLIAVNR…EKARRNIRDV (64 aa)).

This sequence belongs to the universal ribosomal protein uS5 family. Part of the 30S ribosomal subunit. Contacts proteins S4 and S8.

In terms of biological role, with S4 and S12 plays an important role in translational accuracy. Located at the back of the 30S subunit body where it stabilizes the conformation of the head with respect to the body. The chain is Small ribosomal subunit protein uS5 from Psychromonas ingrahamii (strain DSM 17664 / CCUG 51855 / 37).